The primary structure comprises 39 residues: Colipase (39 aa).

Disulfide bonds link Cys16–Cys27 and Cys22–Cys38.

It belongs to the colipase family. As to quaternary structure, forms a 1:1 stoichiometric complex with pancreatic lipase. As to expression, expressed by the pancreas.

The protein resides in the secreted. In terms of biological role, colipase is a cofactor of pancreatic lipase. It allows the lipase to anchor itself to the lipid-water interface. Without colipase the enzyme is washed off by bile salts, which have an inhibitory effect on the lipase. The sequence is that of Colipase from Squalus acanthias (Spiny dogfish).